A 136-amino-acid chain; its full sequence is UPF0310 protein SMU_442 (136 aa).

It belongs to the UPF0310 family.

The protein is UPF0310 protein SMU_442 of Streptococcus mutans serotype c (strain ATCC 700610 / UA159).